Consider the following 205-residue polypeptide: High frequency lysogenization protein HflD homolog (205 aa).

It belongs to the HflD family.

The protein localises to the cytoplasm. The protein resides in the cell inner membrane. The chain is High frequency lysogenization protein HflD homolog from Haemophilus influenzae (strain 86-028NP).